Reading from the N-terminus, the 295-residue chain is MPWIQIKLNATNENAEQIGDMLMEETGALSVTFLDAQDTPVFEPLPGETRLWGDTDILALYDAEADTNFIITQIKASNMLADDFAYKVEQLEDKDWEREWMENFHPMKFGERLWICPSWREIPEPDAVNVMLDPGLAFGTGTHPTTALCLEWLESLDLSGKTVIDFGCGSGILAIAAIKLGAEKVIGIDIDPQALQASRDNAERNGVANQLEVFLPQNQPEGLIADVVVANILAGPLRELAPIIKSLVKPNGDLAMSGVLDTQAEDVANHYRDELHIDPIAEQSEWCRISGRKQG.

Residues Thr-146, Gly-167, Asp-189, and Asn-231 each coordinate S-adenosyl-L-methionine.

Belongs to the methyltransferase superfamily. PrmA family.

The protein localises to the cytoplasm. It catalyses the reaction L-lysyl-[protein] + 3 S-adenosyl-L-methionine = N(6),N(6),N(6)-trimethyl-L-lysyl-[protein] + 3 S-adenosyl-L-homocysteine + 3 H(+). Functionally, methylates ribosomal protein L11. The polypeptide is Ribosomal protein L11 methyltransferase (Vibrio campbellii (strain ATCC BAA-1116)).